A 156-amino-acid chain; its full sequence is Arginine repressor (156 aa).

It belongs to the ArgR family.

It is found in the cytoplasm. It functions in the pathway amino-acid biosynthesis; L-arginine biosynthesis [regulation]. Its function is as follows. Regulates arginine biosynthesis genes. This Shewanella woodyi (strain ATCC 51908 / MS32) protein is Arginine repressor.